The sequence spans 403 residues: Golgin-45 (403 aa).

Residues 1–63 (MEKMTTLKSS…PRKKVSSDSP (63 aa)) form a disordered region. The Tankyrase-binding motif signature appears at 22–26 (RGAGD). Ser53 carries the phosphoserine modification. Positions 123–216 (RKELSEVKKV…QLERMSIQCD (94 aa)) form a coiled coil. Residue Ser356 is modified to Phosphoserine. Residues 397–403 (QGELIAL) are essential for interaction with GORASP2.

As to quaternary structure, interacts with GORASP2. Interacts with the GTP-bound form of RAB2, but not with other Golgi Rab proteins. Identified in a complex with RAB2 and GORASP2. ADP-ribosylated by tankyrase TNKS and TNKS2. Poly-ADP-ribosylated protein is recognized by RNF146, followed by ubiquitination. In terms of processing, ubiquitinated by RNF146 when poly-ADP-ribosylated, leading to its degradation.

The protein localises to the golgi apparatus membrane. Its function is as follows. Required for normal Golgi structure and for protein transport from the endoplasmic reticulum (ER) through the Golgi apparatus to the cell surface. The protein is Golgin-45 (Blzf1) of Mus musculus (Mouse).